The primary structure comprises 66 residues: Large ribosomal subunit protein bL31 (66 aa).

Zn(2+)-binding residues include Cys16, Cys18, Cys36, and Cys39.

It belongs to the bacterial ribosomal protein bL31 family. Type A subfamily. Part of the 50S ribosomal subunit. Requires Zn(2+) as cofactor.

Binds the 23S rRNA. The polypeptide is Large ribosomal subunit protein bL31 (Desulforamulus reducens (strain ATCC BAA-1160 / DSM 100696 / MI-1) (Desulfotomaculum reducens)).